A 291-amino-acid chain; its full sequence is Gamma-sarcoglycan (291 aa).

The helical; Signal-anchor for type II membrane protein transmembrane segment at 38-58 (LFVLLLLIVLLVNFALTIWIL) threads the bilayer. At 59-291 (RVMWFSPVGM…TCHEHSHLCL (233 aa)) the chain is on the extracellular side. The N-linked (GlcNAc...) asparagine glycan is linked to Asn-110. 2 cysteine pairs are disulfide-bonded: Cys-265–Cys-290 and Cys-267–Cys-283.

This sequence belongs to the sarcoglycan beta/delta/gamma/zeta family. As to quaternary structure, interacts with the syntrophin SNTA1. Cross-link to form 2 major subcomplexes: one consisting of SGCB, SGCD and SGCG and the other consisting of SGCB and SGCD. The association between SGCB and SGCG is particularly strong while SGCA is loosely associated with the other sarcoglycans. Interacts with FLNC. Disulfide bonds are present.

Its subcellular location is the cell membrane. The protein localises to the sarcolemma. It is found in the cytoplasm. It localises to the cytoskeleton. Its function is as follows. Component of the sarcoglycan complex, a subcomplex of the dystrophin-glycoprotein complex which forms a link between the F-actin cytoskeleton and the extracellular matrix. This chain is Gamma-sarcoglycan (SGCG), found in Bos taurus (Bovine).